We begin with the raw amino-acid sequence, 54 residues long: UPF0391 membrane protein Mfla_0947/Mfla_1091 (54 aa).

2 helical membrane passes run 6 to 26 (VIFF…IAAG) and 30 to 50 (IAKI…VAGI).

This sequence belongs to the UPF0391 family.

It localises to the cell membrane. This is UPF0391 membrane protein Mfla_0947/Mfla_1091 from Methylobacillus flagellatus (strain ATCC 51484 / DSM 6875 / VKM B-1610 / KT).